The sequence spans 133 residues: Phosphomevalonate dehydratase small subunit (133 aa).

Ser-62 (proton acceptor) is an active-site residue.

This sequence belongs to the AcnX type II small subunit family. Heterodimer composed of a large subunit (PMDh-L) and a small subunit (PMDh-S).

It catalyses the reaction (R)-5-phosphomevalonate = (2E)-3-methyl-5-phosphooxypent-2-enoate + H2O. The protein operates within isoprenoid biosynthesis; isopentenyl diphosphate biosynthesis via mevalonate pathway. Component of a hydro-lyase that catalyzes the dehydration of mevalonate 5-phosphate (MVA5P) to form trans-anhydromevalonate 5-phosphate (tAHMP). Involved in the archaeal mevalonate (MVA) pathway, which provides fundamental precursors for isoprenoid biosynthesis, such as isopentenyl diphosphate (IPP) and dimethylallyl diphosphate (DMAPP). This chain is Phosphomevalonate dehydratase small subunit, found in Thermococcus kodakarensis (strain ATCC BAA-918 / JCM 12380 / KOD1) (Pyrococcus kodakaraensis (strain KOD1)).